A 143-amino-acid chain; its full sequence is Transcriptional regulator MraZ (143 aa).

2 consecutive SpoVT-AbrB domains span residues 5–47 (TYTP…PRAE) and 76–119 (TDEQ…DAQA).

It belongs to the MraZ family. In terms of assembly, forms oligomers.

It is found in the cytoplasm. The protein resides in the nucleoid. The chain is Transcriptional regulator MraZ from Mycobacterium avium (strain 104).